Here is a 185-residue protein sequence, read N- to C-terminus: Calcium-binding protein K-like (185 aa).

2 EF-hand domains span residues 60-95 and 96-131; these read WDEA…MTRA and PTTD…VVVC. 9 residues coordinate Ca(2+): Asp73, Asp75, Asn77, Glu84, Asp109, Asp111, Ser113, Tyr115, and Glu120.

The protein belongs to the recoverin family.

The polypeptide is Calcium-binding protein K-like (Dictyostelium discoideum (Social amoeba)).